Reading from the N-terminus, the 1041-residue chain is FHIP family protein GF15501 (1041 aa).

Disordered stretches follow at residues 797–856 (RKGN…NKRR) and 907–987 (SNSS…SEPV). Ser-803 is subject to Phosphoserine. Positions 808 to 824 (NLQQQQALNPAQQQGQQ) are enriched in low complexity. 2 stretches are compositionally biased toward polar residues: residues 825-843 (RSAYATLSAATPVQATPTS) and 907-933 (SNSSSESRGFAPGQQSAGTCETSLSTQ). The segment covering 942–973 (SGSSSNSSMGGSSQTLSAHSNATTTHSSSTLH) has biased composition (low complexity).

Belongs to the FHIP family.

The protein is FHIP family protein GF15501 of Drosophila ananassae (Fruit fly).